A 269-amino-acid polypeptide reads, in one-letter code: tRNA uridine(34) hydroxylase (269 aa).

Residues 122–216 (QDPEVVLIDV…YLEAIAPEEN (95 aa)) form the Rhodanese domain. Cysteine 176 acts as the Cysteine persulfide intermediate in catalysis.

It belongs to the TrhO family.

It catalyses the reaction uridine(34) in tRNA + AH2 + O2 = 5-hydroxyuridine(34) in tRNA + A + H2O. Functionally, catalyzes oxygen-dependent 5-hydroxyuridine (ho5U) modification at position 34 in tRNAs. The sequence is that of tRNA uridine(34) hydroxylase from Synechococcus elongatus (strain ATCC 33912 / PCC 7942 / FACHB-805) (Anacystis nidulans R2).